The primary structure comprises 247 residues: Adenosylcobinamide-GDP ribazoletransferase (247 aa).

The next 5 membrane-spanning stretches (helical) occupy residues 34 to 54 (IVMF…IFIL), 59 to 79 (CGIP…TGGF), 113 to 133 (GGLA…ELAL), 138 to 158 (MLAA…LLMY), and 194 to 214 (VLLL…AIFI).

This sequence belongs to the CobS family. It depends on Mg(2+) as a cofactor.

It localises to the cell inner membrane. The enzyme catalyses alpha-ribazole + adenosylcob(III)inamide-GDP = adenosylcob(III)alamin + GMP + H(+). The catalysed reaction is alpha-ribazole 5'-phosphate + adenosylcob(III)inamide-GDP = adenosylcob(III)alamin 5'-phosphate + GMP + H(+). It participates in cofactor biosynthesis; adenosylcobalamin biosynthesis; adenosylcobalamin from cob(II)yrinate a,c-diamide: step 7/7. In terms of biological role, joins adenosylcobinamide-GDP and alpha-ribazole to generate adenosylcobalamin (Ado-cobalamin). Also synthesizes adenosylcobalamin 5'-phosphate from adenosylcobinamide-GDP and alpha-ribazole 5'-phosphate. The sequence is that of Adenosylcobinamide-GDP ribazoletransferase from Salmonella typhi.